Consider the following 125-residue polypeptide: uncharacterized protein (125 aa).

Residues 15–121 (QINQSIIDVI…HSLVLEQKQL (107 aa)) enclose the PRD domain.

This is an uncharacterized protein from Haemophilus influenzae (strain ATCC 51907 / DSM 11121 / KW20 / Rd).